We begin with the raw amino-acid sequence, 337 residues long: DNA-directed RNA polymerase subunit alpha (337 aa).

Positions 1–233 (MVREKVKVST…NLFIPFLHVE (233 aa)) are alpha N-terminal domain (alpha-NTD). The tract at residues 267–337 (LAFQYIFIDQ…IEKAFQKKID (71 aa)) is alpha C-terminal domain (alpha-CTD).

This sequence belongs to the RNA polymerase alpha chain family. As to quaternary structure, in plastids the minimal PEP RNA polymerase catalytic core is composed of four subunits: alpha, beta, beta', and beta''. When a (nuclear-encoded) sigma factor is associated with the core the holoenzyme is formed, which can initiate transcription.

The protein resides in the plastid. It localises to the chloroplast. The enzyme catalyses RNA(n) + a ribonucleoside 5'-triphosphate = RNA(n+1) + diphosphate. DNA-dependent RNA polymerase catalyzes the transcription of DNA into RNA using the four ribonucleoside triphosphates as substrates. The protein is DNA-directed RNA polymerase subunit alpha of Arabis hirsuta (Hairy rock-cress).